The chain runs to 165 residues: Chorismate pyruvate-lyase (165 aa).

Substrate is bound by residues M35, R77, L115, and E156.

This sequence belongs to the UbiC family. As to quaternary structure, monomer.

Its subcellular location is the cytoplasm. It catalyses the reaction chorismate = 4-hydroxybenzoate + pyruvate. Its pathway is cofactor biosynthesis; ubiquinone biosynthesis. Functionally, removes the pyruvyl group from chorismate, with concomitant aromatization of the ring, to provide 4-hydroxybenzoate (4HB) for the ubiquinone pathway. This Salmonella agona (strain SL483) protein is Chorismate pyruvate-lyase.